Here is a 419-residue protein sequence, read N- to C-terminus: Enolase (419 aa).

Residue Q161 participates in (2R)-2-phosphoglycerate binding. The active-site Proton donor is E205. Residues D240, E283, and D309 each coordinate Mg(2+). The (2R)-2-phosphoglycerate site is built by K334, R363, S364, and K385. K334 acts as the Proton acceptor in catalysis.

It belongs to the enolase family. Mg(2+) serves as cofactor.

Its subcellular location is the cytoplasm. It is found in the secreted. The protein resides in the cell surface. The catalysed reaction is (2R)-2-phosphoglycerate = phosphoenolpyruvate + H2O. It participates in carbohydrate degradation; glycolysis; pyruvate from D-glyceraldehyde 3-phosphate: step 4/5. Catalyzes the reversible conversion of 2-phosphoglycerate (2-PG) into phosphoenolpyruvate (PEP). It is essential for the degradation of carbohydrates via glycolysis. In Saccharolobus islandicus (strain M.16.27) (Sulfolobus islandicus), this protein is Enolase.